The primary structure comprises 513 residues: MSKRALISVSDKTGLVELARGLVELGWELLSTGGTARTLIAAGLPVTEVAAVTGFPEILDGRVKTLHPKIHGGILARPTPEHLAQLQEQGIQPIDLVVVNLYPFRETIARPGVTPAEAIENIDIGGPAMVRAAAKNHERVGIVVDPASYNEVLTELREKGSLSPETRRRLAAAAFAHTAAYDAAIAAYFQRLMRNEEPFPASFVLSGEKVQDLRYGENPHQGAAFYRLPAPPPGTLAGARQLQGKELSYNNLMDLDAAWNLACDFKEPVVAIIKHTNPCGVARASTPAAAYRLAYAADPVSAFGGIVACNRPVDGEMAGAMTEIFLEAVIAPSFTPEAMAILKSKSNLRLLAAGERAGCRTREYQIRPVSGGFLVQEPDYHVLEPESLKVVTARKPEAKEMADLLFAWQVVKHVKSNAIVVARDGVTLGIGAGQMNRVGAARIALEQAGARAKGAVLASDAFFPFGDTVELAAGAGITAIIQPGGSIRDEESIRAADAAGIAMVFTGIRHFRH.

An MGS-like domain is found at 1–144 (MSKRALISVS…KNHERVGIVV (144 aa)).

This sequence belongs to the PurH family.

It carries out the reaction (6R)-10-formyltetrahydrofolate + 5-amino-1-(5-phospho-beta-D-ribosyl)imidazole-4-carboxamide = 5-formamido-1-(5-phospho-D-ribosyl)imidazole-4-carboxamide + (6S)-5,6,7,8-tetrahydrofolate. It catalyses the reaction IMP + H2O = 5-formamido-1-(5-phospho-D-ribosyl)imidazole-4-carboxamide. It participates in purine metabolism; IMP biosynthesis via de novo pathway; 5-formamido-1-(5-phospho-D-ribosyl)imidazole-4-carboxamide from 5-amino-1-(5-phospho-D-ribosyl)imidazole-4-carboxamide (10-formyl THF route): step 1/1. It functions in the pathway purine metabolism; IMP biosynthesis via de novo pathway; IMP from 5-formamido-1-(5-phospho-D-ribosyl)imidazole-4-carboxamide: step 1/1. This is Bifunctional purine biosynthesis protein PurH from Moorella thermoacetica (strain ATCC 39073 / JCM 9320).